The chain runs to 429 residues: Phosphomethylpyrimidine synthase 1 (429 aa).

Residues Asn65, Met94, Tyr123, His162, 184–186 (SRG), 225–228 (DGLR), and Glu264 each bind substrate. His268 is a Zn(2+) binding site. Tyr291 serves as a coordination point for substrate. Residue His332 participates in Zn(2+) binding. [4Fe-4S] cluster contacts are provided by Cys408, Cys411, and Cys415.

The protein belongs to the ThiC family. [4Fe-4S] cluster serves as cofactor.

The enzyme catalyses 5-amino-1-(5-phospho-beta-D-ribosyl)imidazole + S-adenosyl-L-methionine = 4-amino-2-methyl-5-(phosphooxymethyl)pyrimidine + CO + 5'-deoxyadenosine + formate + L-methionine + 3 H(+). Its pathway is cofactor biosynthesis; thiamine diphosphate biosynthesis. Catalyzes the synthesis of the hydroxymethylpyrimidine phosphate (HMP-P) moiety of thiamine from aminoimidazole ribotide (AIR) in a radical S-adenosyl-L-methionine (SAM)-dependent reaction. The sequence is that of Phosphomethylpyrimidine synthase 1 from Methanosphaera stadtmanae (strain ATCC 43021 / DSM 3091 / JCM 11832 / MCB-3).